Here is a 189-residue protein sequence, read N- to C-terminus: UPF0301 protein RC0043 (189 aa).

It belongs to the UPF0301 (AlgH) family.

The sequence is that of UPF0301 protein RC0043 from Rickettsia conorii (strain ATCC VR-613 / Malish 7).